The chain runs to 182 residues: Large ribosomal subunit protein uL6 (182 aa).

Belongs to the universal ribosomal protein uL6 family. As to quaternary structure, part of the 50S ribosomal subunit.

This protein binds to the 23S rRNA, and is important in its secondary structure. It is located near the subunit interface in the base of the L7/L12 stalk, and near the tRNA binding site of the peptidyltransferase center. This is Large ribosomal subunit protein uL6 from Aeropyrum pernix (strain ATCC 700893 / DSM 11879 / JCM 9820 / NBRC 100138 / K1).